We begin with the raw amino-acid sequence, 232 residues long: UPF0758 protein Amet_2289 (232 aa).

The 123-residue stretch at 110–232 (RIKSPDDVSN…YYSLKEKSMM (123 aa)) folds into the MPN domain. H181, H183, and D194 together coordinate Zn(2+). The short motif at 181–194 (HNHPSGDPSPSGED) is the JAMM motif element.

This sequence belongs to the UPF0758 family.

The protein is UPF0758 protein Amet_2289 of Alkaliphilus metalliredigens (strain QYMF).